Reading from the N-terminus, the 142-residue chain is Large ribosomal subunit protein uL13 (142 aa).

It belongs to the universal ribosomal protein uL13 family. As to quaternary structure, part of the 50S ribosomal subunit.

Functionally, this protein is one of the early assembly proteins of the 50S ribosomal subunit, although it is not seen to bind rRNA by itself. It is important during the early stages of 50S assembly. In Hydrogenovibrio crunogenus (strain DSM 25203 / XCL-2) (Thiomicrospira crunogena), this protein is Large ribosomal subunit protein uL13.